A 407-amino-acid chain; its full sequence is tRNA N6-adenosine threonylcarbamoyltransferase, mitochondrial (407 aa).

The transit peptide at 1-30 directs the protein to the mitochondrion; that stretch reads MISIKGTGRFLLDNYRIWQRRAFNRPIQLR. H145 and H149 together coordinate a divalent metal cation. Substrate is bound by residues 170–174, D203, A217, E221, 328–329, and S360; these read LVSGG and SN. D361 serves as a coordination point for a divalent metal cation.

This sequence belongs to the KAE1 / TsaD family. In terms of assembly, homodimer. A divalent metal cation is required as a cofactor.

The protein localises to the mitochondrion. It catalyses the reaction L-threonylcarbamoyladenylate + adenosine(37) in tRNA = N(6)-L-threonylcarbamoyladenosine(37) in tRNA + AMP + H(+). Functionally, required for the formation of a threonylcarbamoyl group on adenosine at position 37 (t(6)A37) in mitochondrial tRNAs that read codons beginning with adenine. Probably involved in the transfer of the threonylcarbamoyl moiety of threonylcarbamoyl-AMP (TC-AMP) to the N6 group of A37. Involved in mitochondrial genome maintenance. The polypeptide is tRNA N6-adenosine threonylcarbamoyltransferase, mitochondrial (QRI7) (Saccharomyces cerevisiae (strain ATCC 204508 / S288c) (Baker's yeast)).